We begin with the raw amino-acid sequence, 753 residues long: 5-methyltetrahydropteroyltriglutamate--homocysteine methyltransferase (753 aa).

Residues 17 to 20 (RELK) and K117 contribute to the 5-methyltetrahydropteroyltri-L-glutamate site. Residues 431–433 (IGS) and E484 each bind L-homocysteine. L-methionine contacts are provided by residues 431-433 (IGS) and E484. 5-methyltetrahydropteroyltri-L-glutamate is bound by residues 515-516 (RC) and W561. D599 provides a ligand contact to L-homocysteine. Position 599 (D599) interacts with L-methionine. E605 provides a ligand contact to 5-methyltetrahydropteroyltri-L-glutamate. Zn(2+)-binding residues include H641, C643, and E665. Residue H694 is the Proton donor of the active site. C726 contributes to the Zn(2+) binding site.

This sequence belongs to the vitamin-B12 independent methionine synthase family. Requires Zn(2+) as cofactor.

The catalysed reaction is 5-methyltetrahydropteroyltri-L-glutamate + L-homocysteine = tetrahydropteroyltri-L-glutamate + L-methionine. Its pathway is amino-acid biosynthesis; L-methionine biosynthesis via de novo pathway; L-methionine from L-homocysteine (MetE route): step 1/1. Functionally, catalyzes the transfer of a methyl group from 5-methyltetrahydrofolate to homocysteine resulting in methionine formation. The polypeptide is 5-methyltetrahydropteroyltriglutamate--homocysteine methyltransferase (Shigella dysenteriae serotype 1 (strain Sd197)).